The chain runs to 491 residues: Protein phosphatase ppm-1.G (491 aa).

Residues 23–486 enclose the PPM-type phosphatase domain; it reads SYACTTMQGW…DNMTVICTTF (464 aa). Residues aspartate 57 and glycine 58 each contribute to the Mn(2+) site. Residues 112–125 are compositionally biased toward basic and acidic residues; that stretch reads KDIGDEGKPKKAGG. Disordered regions lie at residues 112–136 and 170–294; these read KDIG…ADRI and GDVS…EEMV. Acidic residues-rich tracts occupy residues 173 to 192 and 260 to 294; these read SDDS…QDDT and ATEE…EEMV. 2 residues coordinate Mn(2+): aspartate 428 and aspartate 477.

This sequence belongs to the PP2C family. Mg(2+) serves as cofactor. Requires Mn(2+) as cofactor.

The enzyme catalyses O-phospho-L-seryl-[protein] + H2O = L-seryl-[protein] + phosphate. It catalyses the reaction O-phospho-L-threonyl-[protein] + H2O = L-threonyl-[protein] + phosphate. This Caenorhabditis elegans protein is Protein phosphatase ppm-1.G.